Here is a 467-residue protein sequence, read N- to C-terminus: tRNA(Ile)-lysidine synthase (467 aa).

ATP is bound at residue 26 to 31; the sequence is SGGPDS.

It belongs to the tRNA(Ile)-lysidine synthase family.

The protein resides in the cytoplasm. The catalysed reaction is cytidine(34) in tRNA(Ile2) + L-lysine + ATP = lysidine(34) in tRNA(Ile2) + AMP + diphosphate + H(+). Ligates lysine onto the cytidine present at position 34 of the AUA codon-specific tRNA(Ile) that contains the anticodon CAU, in an ATP-dependent manner. Cytidine is converted to lysidine, thus changing the amino acid specificity of the tRNA from methionine to isoleucine. The protein is tRNA(Ile)-lysidine synthase of Clostridium tetani (strain Massachusetts / E88).